Here is a 224-residue protein sequence, read N- to C-terminus: MGRGKIEIKRIENATNRQVTYSKRRTGIMKKARELTVLCDAQVAIIMFSSTGKYHEFCSPSTDIKGIFDRYQQAIGTSLWIEQYENMQRTLSHLKDINRNLRTEIRQRMGEDLDGLEFDELRGLEQNVDAALKEVRHRKYHVITTQTETYKKKVKHSYEAYETLQQELGLREEPAFGFVDNTGGGWDGGAGAGAAADMFAFRVVPSQPNLHGMAYGGNHDLRLG.

Positions Met1–Ser61 constitute an MADS-box domain. Residues Tyr84–Pro174 form the K-box domain.

As to quaternary structure, may interact with the K-box of MADS4, MADS6 and MADS8. May form a heterodimer with MADS4. In terms of tissue distribution, expressed in lodicules, stamens and carpels.

Its subcellular location is the nucleus. In terms of biological role, probable transcription factor involved in the development of floral organs. Required for normal development of lodicules and stamens (whorls 2 and 3). May function as a heterodimer with MADS4. The chain is MADS-box transcription factor 16 (MADS16) from Oryza sativa subsp. japonica (Rice).